The following is a 303-amino-acid chain: uncharacterized protein (303 aa).

Positions 15-74 (ERIDKFLASTENDWSRTQVQQWVKDGQVVVNGSAVKANYKIQPGDQVTVTVPEPEALDVL) constitute an S4 RNA-binding domain. D138 is an active-site residue.

Belongs to the pseudouridine synthase RluA family.

The enzyme catalyses a uridine in RNA = a pseudouridine in RNA. This is an uncharacterized protein from Bacillus subtilis (strain 168).